Consider the following 148-residue polypeptide: Probable glucosamine 6-phosphate N-acetyltransferase (148 aa).

One can recognise an N-acetyltransferase domain in the interval 3-148 (ISINELNFDD…KQMALYLNGK (146 aa)). Substrate contacts are provided by residues Thr25, 72–75 (KFIH), and 84–86 (EDV). Residues 86–88 (VVV) and 94–99 (LHGIGK) contribute to the acetyl-CoA site. Substrate contacts are provided by residues 115–116 (YK) and Asp120. Residue 129–131 (YCK) coordinates acetyl-CoA. Glu138 lines the substrate pocket.

Belongs to the acetyltransferase family. GNA1 subfamily.

It carries out the reaction D-glucosamine 6-phosphate + acetyl-CoA = N-acetyl-D-glucosamine 6-phosphate + CoA + H(+). It functions in the pathway nucleotide-sugar biosynthesis; UDP-N-acetyl-alpha-D-glucosamine biosynthesis; N-acetyl-alpha-D-glucosamine 1-phosphate from alpha-D-glucosamine 6-phosphate (route I): step 1/2. The chain is Probable glucosamine 6-phosphate N-acetyltransferase from Acanthamoeba polyphaga (Amoeba).